The chain runs to 650 residues: p-hydroxybenzoic acid efflux pump subunit AaeB (650 aa).

11 consecutive transmembrane segments (helical) span residues 7–27 (FPIK…HLNL), 32–52 (WAVM…GGDP), 61–81 (GILR…IMIA), 87–107 (VVML…SSLI), 115–135 (LGLA…SGGL), 148–168 (EIIL…PRSI), 365–385 (LFWL…LGVI), 402–422 (FVYG…YILP), 426–446 (QSAV…GILI), 450–470 (QIGT…DNPM), and 478–498 (IDNA…ILLI).

Belongs to the aromatic acid exporter ArAE (TC 2.A.85) family.

Its subcellular location is the cell inner membrane. Its function is as follows. Forms an efflux pump with AaeA. Could function as a metabolic relief valve, allowing to eliminate certain compounds when they accumulate to high levels in the cell. The protein is p-hydroxybenzoic acid efflux pump subunit AaeB of Pantoea ananatis (strain LMG 20103).